Consider the following 833-residue polypeptide: Translation initiation factor IF-2 (833 aa).

The interval 1 to 247 (MTEDVKKADG…ALQQAFTKPA (247 aa)) is disordered. Basic and acidic residues-rich tracts occupy residues 53–99 (QKAE…EAKK) and 110–152 (VDVE…RYAE). The segment covering 153 to 166 (LSEEDAENENSEDY) has biased composition (acidic residues). Positions 187–203 (KENRNRGGKNKVAKAKK) are enriched in basic residues. The segment covering 204 to 227 (GGREDESSKTERESNRRNQKDGKM) has biased composition (basic and acidic residues). In terms of domain architecture, tr-type G spans 333–502 (TRAPVVTIMG…LLQSEVLELT (170 aa)). The segment at 342 to 349 (GHVDHGKT) is G1. 342 to 349 (GHVDHGKT) provides a ligand contact to GTP. The G2 stretch occupies residues 367–371 (GITQH). The G3 stretch occupies residues 388–391 (DTPG). Residues 388–392 (DTPGH) and 442–445 (NKID) contribute to the GTP site. Positions 442 to 445 (NKID) are G4. The tract at residues 478 to 480 (SAK) is G5.

The protein belongs to the TRAFAC class translation factor GTPase superfamily. Classic translation factor GTPase family. IF-2 subfamily.

Its subcellular location is the cytoplasm. Functionally, one of the essential components for the initiation of protein synthesis. Protects formylmethionyl-tRNA from spontaneous hydrolysis and promotes its binding to the 30S ribosomal subunits. Also involved in the hydrolysis of GTP during the formation of the 70S ribosomal complex. The polypeptide is Translation initiation factor IF-2 (infB) (Pasteurella multocida (strain Pm70)).